A 422-amino-acid polypeptide reads, in one-letter code: Zinc finger protein 550 (422 aa).

In terms of domain architecture, KRAB spans 12–83 (VTFKDVAVTF…KRGLSHATCA (72 aa)). Residues 113-158 (LESSTSSDSRLGRARDEEGLLEMQKGKVTPETDLHKETHLGKVSLE) form a disordered region. Residues 122–152 (RLGRARDEEGLLEMQKGKVTPETDLHKETHL) show a composition bias toward basic and acidic residues. 8 consecutive C2H2-type zinc fingers follow at residues 203–225 (YKCKQCGKGFNRKWYLVRHQRVH), 231–253 (YECNACGKAFSQSSTLIRHYLIH), 259–281 (YKCLECGKAFKRRSYLMQHHPIH), 287–309 (YECSQCRKAFTHRSTFIRHNRTH), 315–337 (FECKECEKAFSNRAHLIQHYIIH), 343–365 (YDCMACGKAFRCSSELIQHQRIH), 371–393 (YECTQCGKAFHRSTYLIQHSVIH), and 399–421 (YKCIECGKAFKRRSHLLQHQRVH).

The protein belongs to the krueppel C2H2-type zinc-finger protein family.

Its subcellular location is the nucleus. Functionally, may be involved in transcriptional regulation. In Homo sapiens (Human), this protein is Zinc finger protein 550 (ZNF550).